Consider the following 88-residue polypeptide: Long neurotoxin 20 (88 aa).

Positions 1-21 (MKTLLLTLVVVTIVCLDLGNS) are cleaved as a signal peptide. 5 disulfides stabilise this stretch: cysteine 24-cysteine 42, cysteine 35-cysteine 63, cysteine 48-cysteine 52, cysteine 67-cysteine 78, and cysteine 79-cysteine 84.

This sequence belongs to the three-finger toxin family. Long-chain subfamily. Type II alpha-neurotoxin sub-subfamily. Expressed by the venom gland.

The protein resides in the secreted. Binds with high affinity to muscular (alpha-1/CHRNA1) and neuronal (alpha-7/CHRNA7) nicotinic acetylcholine receptor (nAChR) and inhibits acetylcholine from binding to the receptor, thereby impairing neuromuscular and neuronal transmission. The protein is Long neurotoxin 20 of Drysdalia coronoides (White-lipped snake).